The chain runs to 534 residues: MFS transporter fmqE (534 aa).

The next 12 membrane-spanning stretches (helical) occupy residues 48–68 (LLLF…VCAS), 109–129 (LWTS…GFLA), 136–156 (WTAV…VFSS), 169–189 (GAVV…VAPI), 194–214 (ALLQ…LGIV), 228–248 (IVFG…FLVP), 326–346 (AIGV…GLNV), 349–369 (VFDI…LGWL), 379–399 (LWLW…ALGF), 407–427 (LAIA…TVGV), 447–467 (VAFI…PYMY), and 478–498 (TGFV…FLVP).

This sequence belongs to the major facilitator superfamily. Sugar transporter (TC 2.A.1.1) family.

It localises to the cytoplasmic vesicle membrane. Its function is as follows. MFS transporter; part of the gene cluster that mediates the biosynthesis of the antitumor cytotoxic peptidyl alkaloids fumiquinazolines that confer a dual-usage capability to defend against phagocytes in the environment and animal hosts. Probably involved in fumiquinazolines metabolism and transport. In Aspergillus fumigatus (strain ATCC MYA-4609 / CBS 101355 / FGSC A1100 / Af293) (Neosartorya fumigata), this protein is MFS transporter fmqE.